Consider the following 448-residue polypeptide: tRNA-2-methylthio-N(6)-dimethylallyladenosine synthase (448 aa).

An MTTase N-terminal domain is found at 2–119; sequence KKLYIKTFGC…LSDLIAQRRK (118 aa). 6 residues coordinate [4Fe-4S] cluster: cysteine 11, cysteine 48, cysteine 82, cysteine 156, cysteine 160, and cysteine 163. Residues 142–375 form the Radical SAM core domain; the sequence is RQTRGSAYVS…LALIEGQSNQ (234 aa). One can recognise a TRAM domain in the interval 378–444; that stretch reads QKMLGKTERV…NYTLRGELVE (67 aa).

It belongs to the methylthiotransferase family. MiaB subfamily. As to quaternary structure, monomer. [4Fe-4S] cluster is required as a cofactor.

It is found in the cytoplasm. The enzyme catalyses N(6)-dimethylallyladenosine(37) in tRNA + (sulfur carrier)-SH + AH2 + 2 S-adenosyl-L-methionine = 2-methylsulfanyl-N(6)-dimethylallyladenosine(37) in tRNA + (sulfur carrier)-H + 5'-deoxyadenosine + L-methionine + A + S-adenosyl-L-homocysteine + 2 H(+). Catalyzes the methylthiolation of N6-(dimethylallyl)adenosine (i(6)A), leading to the formation of 2-methylthio-N6-(dimethylallyl)adenosine (ms(2)i(6)A) at position 37 in tRNAs that read codons beginning with uridine. The polypeptide is tRNA-2-methylthio-N(6)-dimethylallyladenosine synthase (Polynucleobacter asymbioticus (strain DSM 18221 / CIP 109841 / QLW-P1DMWA-1) (Polynucleobacter necessarius subsp. asymbioticus)).